A 371-amino-acid polypeptide reads, in one-letter code: N-acetyldiaminopimelate deacetylase (371 aa).

D68 is an active-site residue. E127 serves as the catalytic Proton acceptor.

The protein belongs to the peptidase M20A family. N-acetyldiaminopimelate deacetylase subfamily.

It carries out the reaction N-acetyl-(2S,6S)-2,6-diaminopimelate + H2O = (2S,6S)-2,6-diaminopimelate + acetate. It participates in amino-acid biosynthesis; L-lysine biosynthesis via DAP pathway; LL-2,6-diaminopimelate from (S)-tetrahydrodipicolinate (acetylase route): step 3/3. In terms of biological role, catalyzes the conversion of N-acetyl-diaminopimelate to diaminopimelate and acetate. This Listeria monocytogenes serovar 1/2a (strain ATCC BAA-679 / EGD-e) protein is N-acetyldiaminopimelate deacetylase.